We begin with the raw amino-acid sequence, 194 residues long: dITP/XTP pyrophosphatase (194 aa).

7-12 (SGNVNK) contacts substrate. Positions 38 and 67 each coordinate Mg(2+). The Proton acceptor role is filled by D67. Substrate-binding positions include S68, 151–154 (FGYD), K174, and 179–180 (HR).

This sequence belongs to the HAM1 NTPase family. As to quaternary structure, homodimer. It depends on Mg(2+) as a cofactor.

It catalyses the reaction XTP + H2O = XMP + diphosphate + H(+). The catalysed reaction is dITP + H2O = dIMP + diphosphate + H(+). The enzyme catalyses ITP + H2O = IMP + diphosphate + H(+). Functionally, pyrophosphatase that catalyzes the hydrolysis of nucleoside triphosphates to their monophosphate derivatives, with a high preference for the non-canonical purine nucleotides XTP (xanthosine triphosphate), dITP (deoxyinosine triphosphate) and ITP. Seems to function as a house-cleaning enzyme that removes non-canonical purine nucleotides from the nucleotide pool, thus preventing their incorporation into DNA/RNA and avoiding chromosomal lesions. This is dITP/XTP pyrophosphatase from Treponema denticola (strain ATCC 35405 / DSM 14222 / CIP 103919 / JCM 8153 / KCTC 15104).